The sequence spans 148 residues: IQ domain-containing protein F5 (148 aa).

2 IQ domains span residues 11–40 (ERSA…RAWI) and 67–96 (QEWA…AVRI).

This Homo sapiens (Human) protein is IQ domain-containing protein F5 (IQCF5).